Reading from the N-terminus, the 398-residue chain is 2,3-bisphosphoglycerate-independent phosphoglycerate mutase (398 aa).

The protein belongs to the BPG-independent phosphoglycerate mutase family. A-PGAM subfamily.

It carries out the reaction (2R)-2-phosphoglycerate = (2R)-3-phosphoglycerate. Its pathway is carbohydrate degradation; glycolysis; pyruvate from D-glyceraldehyde 3-phosphate: step 3/5. Catalyzes the interconversion of 2-phosphoglycerate and 3-phosphoglycerate. The polypeptide is 2,3-bisphosphoglycerate-independent phosphoglycerate mutase (Methanosarcina barkeri (strain Fusaro / DSM 804)).